A 635-amino-acid polypeptide reads, in one-letter code: Threonine--tRNA ligase (635 aa).

One can recognise a TGS domain in the interval 1–61; that stretch reads MIKITLKDGK…HKDSSLEILT (61 aa). Positions 242–532 are catalytic; it reads DHRKLGKELD…LIEQYAGAFP (291 aa). Zn(2+) contacts are provided by cysteine 333, histidine 384, and histidine 509.

This sequence belongs to the class-II aminoacyl-tRNA synthetase family. Homodimer. The cofactor is Zn(2+).

The protein localises to the cytoplasm. It carries out the reaction tRNA(Thr) + L-threonine + ATP = L-threonyl-tRNA(Thr) + AMP + diphosphate + H(+). Functionally, catalyzes the attachment of threonine to tRNA(Thr) in a two-step reaction: L-threonine is first activated by ATP to form Thr-AMP and then transferred to the acceptor end of tRNA(Thr). Also edits incorrectly charged L-seryl-tRNA(Thr). This is Threonine--tRNA ligase from Clostridium botulinum (strain Kyoto / Type A2).